Consider the following 472-residue polypeptide: Ribosomal protein uS12 methylthiotransferase RimO (472 aa).

Residues 22-133 (PSVAFAHLGC…IVDVLKRVEA (112 aa)) enclose the MTTase N-terminal domain. [4Fe-4S] cluster contacts are provided by cysteine 31, cysteine 67, cysteine 96, cysteine 171, cysteine 175, and cysteine 178. One can recognise a Radical SAM core domain in the interval 157-386 (TTDQAVAYLK…MALQQPISAE (230 aa)). The region spanning 389-460 (QRWVGRTIDV…VYDLTGQLVD (72 aa)) is the TRAM domain.

The protein belongs to the methylthiotransferase family. RimO subfamily. [4Fe-4S] cluster is required as a cofactor.

Its subcellular location is the cytoplasm. The catalysed reaction is L-aspartate(89)-[ribosomal protein uS12]-hydrogen + (sulfur carrier)-SH + AH2 + 2 S-adenosyl-L-methionine = 3-methylsulfanyl-L-aspartate(89)-[ribosomal protein uS12]-hydrogen + (sulfur carrier)-H + 5'-deoxyadenosine + L-methionine + A + S-adenosyl-L-homocysteine + 2 H(+). In terms of biological role, catalyzes the methylthiolation of an aspartic acid residue of ribosomal protein uS12. The chain is Ribosomal protein uS12 methylthiotransferase RimO from Prochlorococcus marinus (strain MIT 9303).